We begin with the raw amino-acid sequence, 121 residues long: Large ribosomal subunit protein uL18 (121 aa).

It belongs to the universal ribosomal protein uL18 family. As to quaternary structure, part of the 50S ribosomal subunit; part of the 5S rRNA/L5/L18/L25 subcomplex. Contacts the 5S and 23S rRNAs.

In terms of biological role, this is one of the proteins that bind and probably mediate the attachment of the 5S RNA into the large ribosomal subunit, where it forms part of the central protuberance. The sequence is that of Large ribosomal subunit protein uL18 from Ureaplasma parvum serovar 3 (strain ATCC 27815 / 27 / NCTC 11736).